The chain runs to 98 residues: MKIACTLVLFVMLRCYVNARNIPGTCRTHTGIILLSGEEWKDPNHCSTYRCSIFDGEAELEGVTCAAYHVPPHCRLVSAANELYPQCCPTVICSDKSR.

Positions 1–20 (MKIACTLVLFVMLRCYVNAR) are cleaved as a signal peptide.

Contains 4 disulfide bonds. As to expression, expressed by the venom gland.

Its subcellular location is the secreted. The sequence is that of Venom toxin OcyC11 from Opisthacanthus cayaporum (South American scorpion).